The primary structure comprises 147 residues: MSHRVSILSSHFSPASAVMASEKEAALAATPSDSPTIFDKIISKEIPSTVVFEDDKVLAFRDITPQGPVHILLIPKVRDGLTGLSKAEERHIDILGRLLYTAKLVAKQEGLAEGFRIVINDGPQGCQSVYHIHVHLIGGRQMNWPPG.

The HIT domain maps to 37-147; it reads IFDKIISKEI…GGRQMNWPPG (111 aa). The Histidine triad motif signature appears at 131 to 135; the sequence is HIHVH. The active-site Tele-AMP-histidine intermediate is the histidine 133. Substrate is bound at residue histidine 135.

It localises to the peroxisome. The protein localises to the plastid. It is found in the chloroplast. The catalysed reaction is adenosine 5'-phosphosulfate + H2O = sulfate + AMP + 2 H(+). Functionally, possesses adenylylsulfatase activity in vitro. This Arabidopsis thaliana (Mouse-ear cress) protein is Adenylylsulfatase HINT1.